The chain runs to 596 residues: Aspartate--tRNA(Asp/Asn) ligase (596 aa).

Position 175 (Glu175) interacts with L-aspartate. Positions 199-202 are aspartate; that stretch reads QQYK. Arg221 and His454 together coordinate L-aspartate. Residue 221 to 223 coordinates ATP; the sequence is RDE. Glu488 contributes to the ATP binding site. Arg495 is a binding site for L-aspartate. Residue 540 to 543 coordinates ATP; that stretch reads GIDR.

It belongs to the class-II aminoacyl-tRNA synthetase family. Type 1 subfamily. In terms of assembly, homodimer.

It localises to the cytoplasm. It catalyses the reaction tRNA(Asx) + L-aspartate + ATP = L-aspartyl-tRNA(Asx) + AMP + diphosphate. Functionally, aspartyl-tRNA synthetase with relaxed tRNA specificity since it is able to aspartylate not only its cognate tRNA(Asp) but also tRNA(Asn). Reaction proceeds in two steps: L-aspartate is first activated by ATP to form Asp-AMP and then transferred to the acceptor end of tRNA(Asp/Asn). The protein is Aspartate--tRNA(Asp/Asn) ligase of Rhizobium leguminosarum bv. trifolii (strain WSM2304).